Consider the following 304-residue polypeptide: uncharacterized protein (304 aa).

Catalysis depends on charge relay system residues Thr58 and Tyr121. The active-site Proton donor is Tyr147. The Schiff-base intermediate with substrate role is filled by Lys175.

The protein belongs to the DapA family. In terms of assembly, homotetramer.

It is found in the cytoplasm. This is an uncharacterized protein from Halobacterium salinarum (strain ATCC 29341 / DSM 671 / R1).